Here is a 403-residue protein sequence, read N- to C-terminus: 3-oxoacyl-[acyl-carrier-protein] synthase 2 (403 aa).

Positions 1-403 (VITGMGALSP…GGHNAVLVFK (403 aa)) constitute a Ketosynthase family 3 (KS3) domain. Residues Cys158, His297, and His334 each act as for beta-ketoacyl synthase activity in the active site.

It belongs to the thiolase-like superfamily. Beta-ketoacyl-ACP synthases family.

The catalysed reaction is a fatty acyl-[ACP] + malonyl-[ACP] + H(+) = a 3-oxoacyl-[ACP] + holo-[ACP] + CO2. The enzyme catalyses (9Z)-hexadecenoyl-[ACP] + malonyl-[ACP] + H(+) = 3-oxo-(11Z)-octadecenoyl-[ACP] + holo-[ACP] + CO2. Its pathway is lipid metabolism; fatty acid biosynthesis. In terms of biological role, involved in the type II fatty acid elongation cycle. Catalyzes the elongation of a wide range of acyl-ACP by the addition of two carbons from malonyl-ACP to an acyl acceptor. Can efficiently catalyze the conversion of palmitoleoyl-ACP (cis-hexadec-9-enoyl-ACP) to cis-vaccenoyl-ACP (cis-octadec-11-enoyl-ACP), an essential step in the thermal regulation of fatty acid composition. This is 3-oxoacyl-[acyl-carrier-protein] synthase 2 (fabF) from Staphylococcus aureus.